Reading from the N-terminus, the 196-residue chain is DNA replication complex GINS protein PSF1 (196 aa).

It belongs to the GINS1/PSF1 family. Component of the GINS complex which is a heterotetramer of GINS1, GINS2, GINS3 and GINS4. Forms a stable subcomplex with GINS4. GINS complex interacts with DNA primase in vitro. Component of the CMG helicase complex, a hexameric ring of related MCM2-7 subunits stabilized by CDC45 and the tetrameric GINS complex.

The protein resides in the nucleus. It localises to the chromosome. Its function is as follows. Required for correct functioning of the GINS complex, a complex that plays an essential role in the initiation of DNA replication, and progression of DNA replication forks. GINS complex is a core component of CDC45-MCM-GINS (CMG) helicase, the molecular machine that unwinds template DNA during replication, and around which the replisome is built. This chain is DNA replication complex GINS protein PSF1 (Gins1), found in Mus musculus (Mouse).